The chain runs to 452 residues: Protein disulfide-isomerase TMX3 (452 aa).

The signal sequence occupies residues 1-26; it reads MAAAGLCFILAIVSSTSLLASVPVSA. The 102-residue stretch at 27–128 folds into the Thioredoxin domain; that stretch reads LVEDLDDSFK…KEDIVEFANR (102 aa). Residues 27 to 375 are Lumenal-facing; that stretch reads LVEDLDDSFK…TVVSVFKSSP (349 aa). Catalysis depends on nucleophile residues Cys-53 and Cys-56. The cysteines at positions 53 and 56 are disulfide-linked. 2 N-linked (GlcNAc...) asparagine glycosylation sites follow: Asn-258 and Asn-313. The chain crosses the membrane as a helical span at residues 376–396; the sequence is LLGCFLFGLPLGVISIMCYGI. Topologically, residues 397–452 are cytoplasmic; the sequence is CTADTEDGSEEMTRKDVIDQNASDEGSDEEEEKGREITDVSDEDQQEKDFMEKKID. Residues 405–452 are disordered; sequence SEEMTRKDVIDQNASDEGSDEEEEKGREITDVSDEDQQEKDFMEKKID. Basic and acidic residues predominate over residues 443-452; the sequence is EKDFMEKKID. Residues 449–452 carry the Di-lysine motif motif; the sequence is KKID.

This sequence belongs to the protein disulfide isomerase family.

Its subcellular location is the endoplasmic reticulum membrane. The catalysed reaction is Catalyzes the rearrangement of -S-S- bonds in proteins.. Functionally, probable disulfide isomerase, which participates in the folding of proteins containing disulfide bonds. May act as a dithiol oxidase. Acts as a regulator of endoplasmic reticulum-mitochondria contact sites via its ability to regulate redox signals. This is Protein disulfide-isomerase TMX3 (tmx3) from Xenopus laevis (African clawed frog).